The sequence spans 252 residues: Expansin-A12 (252 aa).

The N-terminal stretch at 1–23 (MDMKGTYLVTVILLVSTLSVGMC) is a signal peptide. An Expansin-like EG45 domain is found at 45 to 156 (GGACGYDNPY…RRVGCKRRGG (112 aa)). The region spanning 166 to 246 (NFNMVMISNV…SWWFGQTFSS (81 aa)) is the Expansin-like CBD domain.

It belongs to the expansin family. Expansin A subfamily.

The protein resides in the secreted. The protein localises to the cell wall. It localises to the membrane. In terms of biological role, causes loosening and extension of plant cell walls by disrupting non-covalent bonding between cellulose microfibrils and matrix glucans. No enzymatic activity has been found. This chain is Expansin-A12 (EXPA12), found in Arabidopsis thaliana (Mouse-ear cress).